The chain runs to 227 residues: UPF0758 protein Pcryo_2119 (227 aa).

Residues 102–224 (GLGRSQMVKD…TLSYAENSLP (123 aa)) enclose the MPN domain. 3 residues coordinate Zn(2+): His173, His175, and Asp186. Positions 173–186 (HNHPHTDAKPSTAD) match the JAMM motif motif.

The protein belongs to the UPF0758 family.

This is UPF0758 protein Pcryo_2119 from Psychrobacter cryohalolentis (strain ATCC BAA-1226 / DSM 17306 / VKM B-2378 / K5).